Reading from the N-terminus, the 123-residue chain is Small ribosomal subunit protein uS12 (123 aa).

D89 is subject to 3-methylthioaspartic acid.

This sequence belongs to the universal ribosomal protein uS12 family. In terms of assembly, part of the 30S ribosomal subunit. Contacts proteins S8 and S17. May interact with IF1 in the 30S initiation complex.

In terms of biological role, with S4 and S5 plays an important role in translational accuracy. Its function is as follows. Interacts with and stabilizes bases of the 16S rRNA that are involved in tRNA selection in the A site and with the mRNA backbone. Located at the interface of the 30S and 50S subunits, it traverses the body of the 30S subunit contacting proteins on the other side and probably holding the rRNA structure together. The combined cluster of proteins S8, S12 and S17 appears to hold together the shoulder and platform of the 30S subunit. This Rhodospirillum centenum (strain ATCC 51521 / SW) protein is Small ribosomal subunit protein uS12.